The following is a 156-amino-acid chain: Small ribosomal subunit protein uS7 (156 aa).

Belongs to the universal ribosomal protein uS7 family. Part of the 30S ribosomal subunit. Contacts proteins S9 and S11.

In terms of biological role, one of the primary rRNA binding proteins, it binds directly to 16S rRNA where it nucleates assembly of the head domain of the 30S subunit. Is located at the subunit interface close to the decoding center, probably blocks exit of the E-site tRNA. The protein is Small ribosomal subunit protein uS7 of Photorhabdus laumondii subsp. laumondii (strain DSM 15139 / CIP 105565 / TT01) (Photorhabdus luminescens subsp. laumondii).